A 173-amino-acid polypeptide reads, in one-letter code: Oleosin 18.5 kDa (173 aa).

The segment at 1 to 45 (MADTARGTHHDIIGRDQYPMMGRDRDQYQMSGRGSDYSKSRQIAK) is polar. Residues 46–117 (AATAVTAGGS…AAITVFSWIY (72 aa)) are hydrophobic. 3 helical membrane passes run 54-74 (GSLL…LTVA), 76-96 (PLLV…ALLI), and 97-117 (TGFL…SWIY). Residues 151–173 (YYGQQHTGGEHDRDRTRGGQHTT) form a disordered region. The segment covering 158–167 (GGEHDRDRTR) has biased composition (basic and acidic residues).

It belongs to the oleosin family.

It localises to the lipid droplet. Its subcellular location is the membrane. Its function is as follows. May have a structural role to stabilize the lipid body during desiccation of the seed by preventing coalescence of the oil. Probably interacts with both lipid and phospholipid moieties of lipid bodies. May also provide recognition signals for specific lipase anchorage in lipolysis during seedling growth. This chain is Oleosin 18.5 kDa, found in Arabidopsis thaliana (Mouse-ear cress).